Reading from the N-terminus, the 322-residue chain is Zinc finger C2HC domain-containing protein CBG14627 (322 aa).

2 C2HC/C3H-type zinc fingers span residues 9-38 and 119-148; these read PVYP…LATL and DYVQ…QTTR. Zn(2+)-binding residues include Cys13, Cys16, His28, Cys32, Cys123, Cys126, His138, and Cys142. Residues 144–322 form a disordered region; that stretch reads EQTTRKQGGK…SRNNSRSRIF (179 aa). Over residues 148 to 168 the composition is skewed to polar residues; sequence RKQGGKSSAGNRGLTSNNYRS. Residues 171–219 show a composition bias toward basic and acidic residues; sequence SKHEGRKQESSSRNGSAERKTTTRGRDGSLSRARRDDSNDLTNRRKSLE. A compositionally biased stretch (polar residues) spans 220–238; the sequence is TRSQLTTGQANNRTTSLSA. Positions 278–294 are enriched in low complexity; it reads TTTTASASRSGSGSSSR. A compositionally biased stretch (basic and acidic residues) spans 296-305; that stretch reads RTRDESRESR. A compositionally biased stretch (low complexity) spans 311 to 322; it reads SNSRNNSRSRIF.

The protein belongs to the ZC2HC1 family. It depends on Zn(2+) as a cofactor.

This is Zinc finger C2HC domain-containing protein CBG14627 from Caenorhabditis briggsae.